Here is a 258-residue protein sequence, read N- to C-terminus: Protein OS-9 homolog (258 aa).

The N-terminal stretch at 1-18 (MNWTSLVYLWFIFKSIFA) is a signal peptide. N-linked (GlcNAc...) asparagine glycans are attached at residues asparagine 2, asparagine 51, and asparagine 70. In terms of domain architecture, MRH spans 114-237 (TSCVFSFNLH…HINVPKLCSL (124 aa)). Cysteine 116 and cysteine 132 are oxidised to a cystine. The a mannooligosaccharide derivative site is built by tryptophan 127 and glutamine 139. The N-linked (GlcNAc...) asparagine glycan is linked to asparagine 165. Intrachain disulfides connect cysteine 193–cysteine 223 and cysteine 208–cysteine 235. 4 residues coordinate a mannooligosaccharide derivative: aspartate 194, arginine 200, glutamate 219, and tyrosine 225.

This sequence belongs to the OS-9 family. As to quaternary structure, interacts with missfolded ER lumenal proteins.

Its subcellular location is the endoplasmic reticulum membrane. Its function is as follows. Lectin involved in the quality control of the secretory pathway. As a member of the endoplasmic reticulum-associated degradation lumenal (ERAD-L) surveillance system, targets misfolded endoplasmic reticulum lumenal glycoproteins for degradation. This chain is Protein OS-9 homolog (YOS9), found in Candida albicans (strain SC5314 / ATCC MYA-2876) (Yeast).